Reading from the N-terminus, the 479-residue chain is Small ribosomal subunit protein bS1 (479 aa).

S1 motif domains follow at residues 36 to 105 (GDIV…LSKK), 123 to 188 (DEAV…LSRR), 209 to 277 (GAIR…LSLK), and 294 to 363 (GQIV…LSLK). Residues 429–466 (TAQMEKFAAAEAEAANAPVSNGSSRSEESSGGTLASDA) form a disordered region. The span at 437 to 460 (AAEAEAANAPVSNGSSRSEESSGG) shows a compositional bias: low complexity.

It belongs to the bacterial ribosomal protein bS1 family. As to quaternary structure, binds uncharacterized protein MSMEG_2731/MSMEI_2664.

Binds mRNA, facilitating recognition of most mRNAs by the 30S ribosomal subunit during translation initiation. Plays a role in trans-translation; binds tmRNA (the product of the ssrA gene). Binds very poorly to pyrazinoic acid (POA), the active form of the prodrug pyrazinamide (PZA); POA does not disrupt trans-translation in this organism. M.smegmatis is resistant to the antibiotic PZA. In trans-translation Ala-aminoacylated transfer-messenger RNA (tmRNA, product of the ssrA gene; the 2 termini fold to resemble tRNA(Ala) while it encodes a short internal open reading frame (the tag peptide)) acts like a tRNA, entering the A-site of the ribosome and displacing the stalled mRNA (which is subsequently degraded). The ribosome then switches to translate the ORF on the tmRNA, the nascent peptide is terminated with the 'tag peptide' encoded by the tmRNA and thus targeted for degradation. This Mycolicibacterium smegmatis (strain ATCC 700084 / mc(2)155) (Mycobacterium smegmatis) protein is Small ribosomal subunit protein bS1 (rpsA).